Reading from the N-terminus, the 400-residue chain is MIIKPRIRGFICTTTHPVGCEANVLEQINITKAKGKIANGPKKVLVVGSSSGYGLSSRITAAFGSDAATLGVFFEKPSSETKPGTAGWYNSAAFDKFAKAEGLYSKSINCDAFSHEAKQKAIELIKEDLGQVDMVVYSLASPVRKLPDSGELIRSSLKPIGEPYKATAVDTNKDIIIEASVEPATEQEINDTVTVMGGEDWELWMQALAEAGVLADGCKTVAYSYIGTELTWPIYWHGALGKAKMDLDRAAHALDDKLSATGGSANVAVLKSVVTQASSAIPVMPLYIAMVFKKMRAEGLHEGCIEQINRMFSERLYKADGSAAEVDESNRLRLDDWELREEIQQHCRDMWPQVTSENLAELTDYREYKEEFLKLFGFGIEGIDYEQDVNPNVEFDVVSI.

Residues 48-53 (GSSSGY), 74-75 (FE), 111-112 (DA), and 139-140 (LA) each bind NAD(+). Tyr225 provides a ligand contact to substrate. The active-site Proton donor is the Tyr235. Residues Lys244 and 273–275 (VVT) each bind NAD(+).

It belongs to the TER reductase family. In terms of assembly, monomer.

The catalysed reaction is a 2,3-saturated acyl-[ACP] + NAD(+) = a (2E)-enoyl-[ACP] + NADH + H(+). The protein operates within lipid metabolism; fatty acid biosynthesis. Involved in the final reduction of the elongation cycle of fatty acid synthesis (FAS II). Catalyzes the reduction of a carbon-carbon double bond in an enoyl moiety that is covalently linked to an acyl carrier protein (ACP). The protein is Enoyl-[acyl-carrier-protein] reductase [NADH] of Shewanella piezotolerans (strain WP3 / JCM 13877).